We begin with the raw amino-acid sequence, 258 residues long: Acyl-[acyl-carrier-protein]--UDP-N-acetylglucosamine O-acyltransferase (258 aa).

Belongs to the transferase hexapeptide repeat family. LpxA subfamily. As to quaternary structure, homotrimer.

The protein localises to the cytoplasm. The catalysed reaction is a (3R)-hydroxyacyl-[ACP] + UDP-N-acetyl-alpha-D-glucosamine = a UDP-3-O-[(3R)-3-hydroxyacyl]-N-acetyl-alpha-D-glucosamine + holo-[ACP]. It participates in glycolipid biosynthesis; lipid IV(A) biosynthesis; lipid IV(A) from (3R)-3-hydroxytetradecanoyl-[acyl-carrier-protein] and UDP-N-acetyl-alpha-D-glucosamine: step 1/6. Involved in the biosynthesis of lipid A, a phosphorylated glycolipid that anchors the lipopolysaccharide to the outer membrane of the cell. The protein is Acyl-[acyl-carrier-protein]--UDP-N-acetylglucosamine O-acyltransferase of Thiobacillus denitrificans (strain ATCC 25259 / T1).